A 610-amino-acid chain; its full sequence is Sodium-coupled monocarboxylate transporter 1 (610 aa).

The Extracellular portion of the chain corresponds to 1-9 (MDTPRGIGT). Residues 10–30 (FVVWDYVVFAGMLVISAAIGI) traverse the membrane as a helical segment. Topologically, residues 31-51 (YYAFAGGGQQTSKDFLMGGRR) are cytoplasmic. The chain crosses the membrane as a helical span at residues 52–72 (MTAVPVALSLTASFMSAVTVL). Over 73–83 (GTPSEVYRFGA) the chain is Extracellular. A helical transmembrane segment spans residues 84 to 104 (IFSIFAFTYFFVVVISAEVFL). The Cytoplasmic portion of the chain corresponds to 105 to 132 (PVFYKLGITSTYEYLELRFNKCVRLCGT). The helical transmembrane segment at 133 to 153 (VLFIVQTILYTGIVIYAPALA) threads the bilayer. Residues 154–161 (LNQVTGFD) are Extracellular-facing. The helical transmembrane segment at 162 to 182 (LWGAVVATGVVCTFYCTLGGL) threads the bilayer. The Cytoplasmic portion of the chain corresponds to 183-189 (KAVIWTD). Residues 190–210 (VFQVGIMVAGFASVIIQAVVM) traverse the membrane as a helical segment. Over 211 to 239 (QGGISTILNDAYDGGRLNFWNFNPNPLQR) the chain is Extracellular. The chain crosses the membrane as a helical span at residues 240–260 (HTFWTIIIGGTFTWTSIYGVN). Topologically, residues 261-279 (QSQVQRYISCKSRFQAKLS) are cytoplasmic. Residues 280–300 (LYINLVGLWAILTCSVFCGLA) traverse the membrane as a helical segment. Residues 301–336 (LYSRYHDCDPWTAKKVSAPDQLMPYLVLDILQDYPG) lie on the Extracellular side of the membrane. The chain crosses the membrane as a helical span at residues 337-359 (LPGLFVACAYSGTLSTVSSSINA). At 360 to 389 (LAAVTVEDLIKPYFRSLSERSLSWISQGMS) the chain is on the cytoplasmic side. Residues 390–410 (VVYGALCIGMAALASLMGALL) form a helical membrane-spanning segment. Residues 411–415 (QAALS) are Extracellular-facing. A helical transmembrane segment spans residues 416 to 436 (VFGMVGGPLMGLFALGILVPF). Topologically, residues 437 to 439 (ANS) are cytoplasmic. Residues 440–460 (IGALVGLMAGFAISLWVGIGA) traverse the membrane as a helical segment. The Extracellular segment spans residues 461–518 (QIYPPLPERTLPLHLDIQGCNSTYNETNLMTTTEMPFTTSVFQIYNVQRTPLMDNWYS). A glycan (N-linked (GlcNAc...) asparagine) is linked at Asn485. A helical transmembrane segment spans residues 519–539 (LSYLYFSTVGTLVTLLVGILV). The Cytoplasmic segment spans residues 540–610 (SLSTGGRKQN…QSGKSNGTRL (71 aa)). The segment at 585 to 610 (GGTDNPAFNHIELNSDQSGKSNGTRL) is disordered. The span at 596-610 (ELNSDQSGKSNGTRL) shows a compositional bias: polar residues. The PDZ-binding motif lies at 608–610 (TRL).

Belongs to the sodium:solute symporter (SSF) (TC 2.A.21) family. In terms of assembly, interacts (via PDZ-binding motif) with PDZK1 (via PDZ domains 1 and 3); interaction increases nicotinate transport activity of SLC5A8. As to expression, expressed in normal thyroid, localized at the apical pole of thyroid cells facing the colloid lumen, but expression profoundly decreased in thyroid carcinomas. Expressed in normal colon but absent in colon aberrant crypt foci and colon cancers. Present in normal kidney cortex, brain, prostate, gastric mucosa and breast tissue but was significantly down-regulated in primary gliomas, gastric cancer, prostate tumors and breast tumors.

Its subcellular location is the apical cell membrane. The catalysed reaction is (S)-lactate(out) + 2 Na(+)(out) = (S)-lactate(in) + 2 Na(+)(in). It catalyses the reaction propanoate(out) + 2 Na(+)(out) = propanoate(in) + 2 Na(+)(in). It carries out the reaction pyruvate(out) + 2 Na(+)(out) = pyruvate(in) + 2 Na(+)(in). The enzyme catalyses acetate(out) + 2 Na(+)(out) = acetate(in) + 2 Na(+)(in). The catalysed reaction is butanoate(out) + 2 Na(+)(out) = butanoate(in) + 2 Na(+)(in). It catalyses the reaction nicotinate(out) + 2 Na(+)(out) = nicotinate(in) + 2 Na(+)(in). It carries out the reaction (R)-3-hydroxybutanoate(out) + 2 Na(+)(out) = (R)-3-hydroxybutanoate(in) + 2 Na(+)(in). The enzyme catalyses acetoacetate(out) + 2 Na(+)(out) = acetoacetate(in) + 2 Na(+)(in). The catalysed reaction is 4-methyl-2-oxopentanoate(out) + 2 Na(+)(out) = 4-methyl-2-oxopentanoate(in) + 2 Na(+)(in). It catalyses the reaction 5-oxo-L-proline(out) + 2 Na(+)(out) = 5-oxo-L-proline(in) + 2 Na(+)(in). It carries out the reaction iodide(out) = iodide(in). The enzyme catalyses chloride(in) = chloride(out). The catalysed reaction is nitrate(in) = nitrate(out). It catalyses the reaction bromide(in) = bromide(out). Increase of iodide influx inhibited by addition of perchlorate (NaClO(4)), a competitive inhibitor of iodide uptake catalyzed by sodium iodide symporter (NIS). Cotransport of monocarboxylates and nicotinate strongly inhibited by probenecid, nonsteroid anti-inflammatory drugs (ibuprofen, fenoprofen, ketprofen, naproxen) in a Na(+)-dependent manner or by prolonged exposure to external concentrations of monocarboxylates. Acts as an electrogenic sodium (Na(+)) and chloride (Cl-)-dependent sodium-coupled solute transporter, including transport of monocarboxylates (short-chain fatty acids including L-lactate, D-lactate, pyruvate, acetate, propionate, valerate and butyrate), mocarboxylate drugs (nicotinate, benzoate, salicylate and 5-aminosalicylate) and ketone bodies (beta-D-hydroxybutyrate, acetoacetate and alpha-ketoisocaproate), with a Na(+):substrate stoichiometry of between 4:1 and 2:1. Catalyzes passive carrier mediated diffusion of iodide. Mediates iodide transport from the thyrocyte into the colloid lumen through the apical membrane. May be responsible for the absorption of D-lactate and monocarboxylate drugs from the intestinal tract. Acts as a tumor suppressor, suppressing colony formation in colon cancer, prostate cancer and glioma cell lines. May play a critical role in the entry of L-lactate and ketone bodies into neurons by a process driven by an electrochemical Na(+) gradient and hence contribute to the maintenance of the energy status and function of neurons. Mediates sodium-coupled electrogenic transport of pyroglutamate (5-oxo-L-proline). Can mediate the transport of chloride, bromide, iodide and nitrate ions when the external concentration of sodium ions is reduced. The chain is Sodium-coupled monocarboxylate transporter 1 from Homo sapiens (Human).